Here is a 230-residue protein sequence, read N- to C-terminus: uncharacterized protein (230 aa).

10 to 34 provides a ligand contact to NADP(+); the sequence is VVTGASSGIGEAIAKKLSQQGASIV. Serine 139 serves as a coordination point for substrate. Tyrosine 152 (proton acceptor) is an active-site residue.

This sequence belongs to the short-chain dehydrogenases/reductases (SDR) family.

This is an uncharacterized protein from Staphylococcus epidermidis (strain ATCC 12228 / FDA PCI 1200).